Here is a 196-residue protein sequence, read N- to C-terminus: Imidazole glycerol phosphate synthase subunit HisH (196 aa).

The Glutamine amidotransferase type-1 domain maps to K2–M196. C77 (nucleophile) is an active-site residue. Active-site residues include H178 and E180.

In terms of assembly, heterodimer of HisH and HisF.

The protein resides in the cytoplasm. The catalysed reaction is 5-[(5-phospho-1-deoxy-D-ribulos-1-ylimino)methylamino]-1-(5-phospho-beta-D-ribosyl)imidazole-4-carboxamide + L-glutamine = D-erythro-1-(imidazol-4-yl)glycerol 3-phosphate + 5-amino-1-(5-phospho-beta-D-ribosyl)imidazole-4-carboxamide + L-glutamate + H(+). It catalyses the reaction L-glutamine + H2O = L-glutamate + NH4(+). Its pathway is amino-acid biosynthesis; L-histidine biosynthesis; L-histidine from 5-phospho-alpha-D-ribose 1-diphosphate: step 5/9. Its function is as follows. IGPS catalyzes the conversion of PRFAR and glutamine to IGP, AICAR and glutamate. The HisH subunit catalyzes the hydrolysis of glutamine to glutamate and ammonia as part of the synthesis of IGP and AICAR. The resulting ammonia molecule is channeled to the active site of HisF. The sequence is that of Imidazole glycerol phosphate synthase subunit HisH from Pectobacterium atrosepticum (strain SCRI 1043 / ATCC BAA-672) (Erwinia carotovora subsp. atroseptica).